The sequence spans 359 residues: Tyrosine-protein phosphatase non-receptor type 7 (359 aa).

The disordered stretch occupies residues 1 to 34 (MVQACEGRSRAQLPTLSLGADMTQPPPAKAPAKK). Residues 38–51 (LQERRGSSVALMLD) form an interaction with MAP kinases region. Ser-44 carries the phosphoserine modification. The residue at position 66 (Thr-66) is a Phosphothreonine. 2 positions are modified to phosphoserine: Ser-93 and Ser-143. The Tyrosine-protein phosphatase domain maps to 97 to 349 (LEEEFLKIPS…QFLHHTLALY (253 aa)). Substrate-binding positions include Asp-257, 290 to 296 (CSAGIGR), and Gln-334. The active-site Phosphocysteine intermediate is Cys-290. Cys-290 bears the Cysteine sulfenic acid (-SOH) mark.

The protein belongs to the protein-tyrosine phosphatase family. Non-receptor class subfamily. In terms of processing, oxidized at active site cysteine. Treatment with pervanadate (vanadate and H(2)O(2)) or with antigen enhanced oxidation of active site cysteine.

It localises to the cytoplasm. The protein localises to the cytoskeleton. The enzyme catalyses O-phospho-L-tyrosyl-[protein] + H2O = L-tyrosyl-[protein] + phosphate. Its activity is regulated as follows. Inhibited in cells after FCER1A triggering. Its function is as follows. May play a role in the regulation of T and B-lymphocyte development and signal transduction. This Rattus norvegicus (Rat) protein is Tyrosine-protein phosphatase non-receptor type 7 (Ptpn7).